The primary structure comprises 798 residues: uncharacterized protein (798 aa).

The tract at residues 432–573 (KLTDNLSNKS…KNKAYRGRRV (142 aa)) is disordered. Low complexity-rich tracts occupy residues 438 to 449 (SNKSSNDNTSET), 456 to 465 (RSSNSRNSDN), 473 to 487 (SKTQSSDSSKSSRIP), and 495 to 510 (STNSVVSVGSTGSDVY). The span at 519 to 529 (PSRSTYKSRTI) shows a compositional bias: polar residues. The segment covering 535–547 (ESSPVSSRTSSPV) has biased composition (low complexity). Residues 548–562 (DDSRLKQSRISEDKP) show a composition bias toward basic and acidic residues. Over residues 563 to 572 (RKNKAYRGRR) the composition is skewed to basic residues.

It is found in the virion. This is an uncharacterized protein from Acanthamoeba polyphaga (Amoeba).